The sequence spans 501 residues: Probable cytosol aminopeptidase (501 aa).

Mn(2+) contacts are provided by Lys-267 and Asp-272. Lys-279 is an active-site residue. Asp-290, Asp-349, and Glu-351 together coordinate Mn(2+). Arg-353 is an active-site residue.

The protein belongs to the peptidase M17 family. It depends on Mn(2+) as a cofactor.

The protein localises to the cytoplasm. The catalysed reaction is Release of an N-terminal amino acid, Xaa-|-Yaa-, in which Xaa is preferably Leu, but may be other amino acids including Pro although not Arg or Lys, and Yaa may be Pro. Amino acid amides and methyl esters are also readily hydrolyzed, but rates on arylamides are exceedingly low.. The enzyme catalyses Release of an N-terminal amino acid, preferentially leucine, but not glutamic or aspartic acids.. Functionally, presumably involved in the processing and regular turnover of intracellular proteins. Catalyzes the removal of unsubstituted N-terminal amino acids from various peptides. This is Probable cytosol aminopeptidase from Hamiltonella defensa subsp. Acyrthosiphon pisum (strain 5AT).